Here is a 156-residue protein sequence, read N- to C-terminus: Large ribosomal subunit protein bL17 (156 aa).

Residues 127 to 156 (RATRAAASKKAAEEKAAEAAEEKDEAAEEK) are disordered. The segment covering 136 to 146 (KAAEEKAAEAA) has biased composition (basic and acidic residues). Positions 147-156 (EEKDEAAEEK) are enriched in acidic residues.

Belongs to the bacterial ribosomal protein bL17 family. In terms of assembly, part of the 50S ribosomal subunit. Contacts protein L32.

The sequence is that of Large ribosomal subunit protein bL17 from Corynebacterium urealyticum (strain ATCC 43042 / DSM 7109).